The sequence spans 239 residues: 4-hydroxy-tetrahydrodipicolinate reductase (239 aa).

Residues 9–14 (GINGKI), 78–80 (GTT), and 104–107 (APNF) contribute to the NAD(+) site. His-134 (proton donor/acceptor) is an active-site residue. A (S)-2,3,4,5-tetrahydrodipicolinate-binding site is contributed by His-135. The active-site Proton donor is Lys-138. (S)-2,3,4,5-tetrahydrodipicolinate is bound at residue 144–145 (GT).

This sequence belongs to the DapB family.

Its subcellular location is the cytoplasm. The enzyme catalyses (S)-2,3,4,5-tetrahydrodipicolinate + NAD(+) + H2O = (2S,4S)-4-hydroxy-2,3,4,5-tetrahydrodipicolinate + NADH + H(+). The catalysed reaction is (S)-2,3,4,5-tetrahydrodipicolinate + NADP(+) + H2O = (2S,4S)-4-hydroxy-2,3,4,5-tetrahydrodipicolinate + NADPH + H(+). Its pathway is amino-acid biosynthesis; L-lysine biosynthesis via DAP pathway; (S)-tetrahydrodipicolinate from L-aspartate: step 4/4. Catalyzes the conversion of 4-hydroxy-tetrahydrodipicolinate (HTPA) to tetrahydrodipicolinate. This Coxiella burnetii (strain CbuG_Q212) (Coxiella burnetii (strain Q212)) protein is 4-hydroxy-tetrahydrodipicolinate reductase.